We begin with the raw amino-acid sequence, 985 residues long: Probable oxidoreductase YjgC (985 aa).

A 2Fe-2S ferredoxin-type domain is found at 3–79 (GKKTITINGV…GDVIDTLSPD (77 aa)). 4 residues coordinate [2Fe-2S] cluster: Cys-37, Cys-48, Cys-51, and Cys-63. Residues 79–119 (DVKKAQVIGMDKILYNHELYCTVCDYNNGGCEIHNTVKEMK) enclose the 4Fe-4S His(Cys)3-ligated-type domain. The [4Fe-4S] cluster site is built by His-95, Cys-99, Cys-102, Cys-109, Cys-148, Cys-151, Cys-154, Cys-158, Cys-191, Cys-194, Cys-197, Cys-201, Cys-265, Cys-268, Cys-272, and Cys-300. 4Fe-4S ferredoxin-type domains follow at residues 139–170 (PFYR…LTID) and 182–211 (NDVP…EKGM). The region spanning 258–314 (IKKTKTVCTYCGVGCSFDVWTKGRDILKVEPQEEAPANGISTCVKGKFGWDFVNSEE) is the 4Fe-4S Mo/W bis-MGD-type domain.

The protein in the C-terminal section; belongs to the prokaryotic molybdopterin-containing oxidoreductase family. [2Fe-2S] cluster is required as a cofactor. Requires [4Fe-4S] cluster as cofactor. Mo-bis(molybdopterin guanine dinucleotide) serves as cofactor.

This is Probable oxidoreductase YjgC (yjgC) from Bacillus subtilis (strain 168).